A 531-amino-acid chain; its full sequence is SWI/SNF-related matrix-associated actin-dependent regulator of chromatin subfamily D member 2 (531 aa).

Asymmetric dimethylarginine is present on residues R81 and R104. S203 is subject to Phosphoserine. The tract at residues 205–226 (SKAEGDSAGTAGTPGGTPAGDK) is disordered. T217 carries the phosphothreonine modification. A Glycyl lysine isopeptide (Lys-Gly) (interchain with G-Cter in SUMO2) cross-link involves residue K226. One can recognise an SWIB/MDM2 domain in the interval 306–383 (HQPPQYKLDP…PMKLAGLLQH (78 aa)).

Belongs to the SMARCD family. In terms of assembly, component of the multiprotein chromatin-remodeling complexes SWI/SNF: SWI/SNF-A (BAF), SWI/SNF-B (PBAF) and related complexes. The canonical complex contains a catalytic subunit (either SMARCA4/BRG1/BAF190A or SMARCA2/BRM/BAF190B), and at least SMARCE1, ACTL6A/BAF53, SMARCC1/BAF155, SMARCC2/BAF170, and SMARCB1/SNF5/BAF47. Other subunits specific to each of the complexes may also be present permitting several possible combinations developmentally and tissue specific. Component of the BAF complex, which includes at least actin (ACTB), ARID1A/BAF250A, ARID1B/BAF250B, SMARCA2/BRM, SMARCA4/BRG1, ACTL6A/BAF53, ACTL6B/BAF53B, SMARCE1/BAF57, SMARCC1/BAF155, SMARCC2/BAF170, SMARCB1/SNF5/INI1, and one or more SMARCD1/BAF60A, SMARCD2/BAF60B, or SMARCD3/BAF60C. In muscle cells, the BAF complex also contains DPF3. Component of the SWI/SNF-B (PBAF) chromatin remodeling complex, at least composed of SMARCA4/BRG1, SMARCB1/BAF47/SNF5, ACTL6A/BAF53A or ACTL6B/BAF53B, SMARCE1/BAF57, SMARCD1/BAF60A, SMARCD2/BAF60B, perhaps SMARCD3/BAF60C, SMARCC1/BAF155, SMARCC2/BAF170, PBRM1/BAF180, ARID2/BAF200 and actin (ACTB). Interacts with UNKL. Interacts with CEBPE. Ubiquitinated through a signaling process involving RAC1 and the RING finger protein UNKL. Isoform 2 is expressed in the pancreas.

It is found in the nucleus. Its function is as follows. Involved in transcriptional activation and repression of select genes by chromatin remodeling (alteration of DNA-nucleosome topology). Component of SWI/SNF chromatin remodeling complexes that carry out key enzymatic activities, changing chromatin structure by altering DNA-histone contacts within a nucleosome in an ATP-dependent manner. Critical regulator of myeloid differentiation, controlling granulocytopoiesis and the expression of genes involved in neutrophil granule formation. The sequence is that of SWI/SNF-related matrix-associated actin-dependent regulator of chromatin subfamily D member 2 (SMARCD2) from Homo sapiens (Human).